The primary structure comprises 423 residues: MKIAFFNPQGNFDKKDSHLTEHPDFGGQLIYVKELAKAMGKMGNKVDIITRKIIDKKWPEFSGDFDYYPDAENVRIVRIAFGGDKFLNKERLWDFLGEYVKNIYRFYQKEGFPDFVTTHYGDGGIAGAMFKKLTHIPYSFTAHSLGAQKKDKFKNAKDAEERYRFSIRISAEKVAMKYASFIVTSTQQEKEEQYSHNEYIDVYPEIKDKIFVIPPGVNTNIFYPDDTDEYKFSKLPIIVSSRLDPKKNIEFVIESFNKYLKDGFELIIVLRKKPEEYTGYERQLIEKAKKAKGKFLVITSQKELAKLYNSAAKHRGIFALTSHYEPFGLAIIEAMACKLPVISTRNGGPVEILDNGKYGHLVSTHEEFKEAALKIKDNYEKLSEESYKRVMEKYTWERCAKEYLNLIEKENVILPEFFEKQMG.

It belongs to the glycosyltransferase 1 family.

The catalysed reaction is beta-D-fructose 6-phosphate + UDP-alpha-D-glucose = sucrose 6(F)-phosphate + UDP + H(+). Functionally, plays a role in sucrose synthesis by catalyzing the first step of sucrose biosynthesis from UDP-glucose and fructose-6-phosphate. This Thermosipho melanesiensis (strain DSM 12029 / CIP 104789 / BI429) protein is Probable sucrose-phosphate synthase.